Reading from the N-terminus, the 281-residue chain is uncharacterized protein (281 aa).

Disordered stretches follow at residues 192-212 (SNSSVNLSMDKKSDDSKIQET) and 227-281 (EDYV…SEEY). A compositionally biased stretch (basic and acidic residues) spans 200 to 211 (MDKKSDDSKIQE). Acidic residues-rich tracts occupy residues 227-240 (EDYVDGNEDCISDN) and 249-260 (DTDSDLGDLEDP).

The protein belongs to the cullin family.

This is an uncharacterized protein from Acanthamoeba polyphaga (Amoeba).